A 418-amino-acid chain; its full sequence is Phosphoglycerate kinase (418 aa).

Residues 18-20 (DFN), R34, 57-60 (HLGR), R115, and R171 each bind substrate. ATP-binding positions include K224, G315, E346, and 375 to 378 (GGDS).

It belongs to the phosphoglycerate kinase family. As to quaternary structure, monomer.

Its subcellular location is the cytoplasm. The enzyme catalyses (2R)-3-phosphoglycerate + ATP = (2R)-3-phospho-glyceroyl phosphate + ADP. Its pathway is carbohydrate degradation; glycolysis; pyruvate from D-glyceraldehyde 3-phosphate: step 2/5. This is Phosphoglycerate kinase from Porphyromonas gingivalis (strain ATCC BAA-308 / W83).